We begin with the raw amino-acid sequence, 569 residues long: Urease subunit alpha (569 aa).

Positions 131–569 (GGMDAHIHFI…LPMAQRYFLF (439 aa)) constitute a Urease domain. Positions 136, 138, and 218 each coordinate Ni(2+). Position 218 is an N6-carboxylysine (Lys-218). His-220 provides a ligand contact to substrate. 2 residues coordinate Ni(2+): His-247 and His-273. The Proton donor role is filled by His-321. Position 361 (Asp-361) interacts with Ni(2+).

The protein belongs to the metallo-dependent hydrolases superfamily. Urease alpha subunit family. In terms of assembly, heterotrimer of UreA (gamma), UreB (beta) and UreC (alpha) subunits. Three heterotrimers associate to form the active enzyme. The cofactor is Ni cation. In terms of processing, carboxylation allows a single lysine to coordinate two nickel ions.

It localises to the cytoplasm. It carries out the reaction urea + 2 H2O + H(+) = hydrogencarbonate + 2 NH4(+). The protein operates within nitrogen metabolism; urea degradation; CO(2) and NH(3) from urea (urease route): step 1/1. The protein is Urease subunit alpha of Rhizobium rhizogenes (strain K84 / ATCC BAA-868) (Agrobacterium radiobacter).